A 95-amino-acid chain; its full sequence is ESAT-6-like protein EsxA (95 aa).

This sequence belongs to the WXG100 family. ESAT-6 subfamily. As to quaternary structure, forms a tight 1:1 complex with EsxB. An artificial EsxA-EsxB heterodimer interacts with EspA.

The protein resides in the secreted. Its function is as follows. An exported protein. Unlike its M.tuberculosis counterpart has poor pore forming ability in artificial liposomes, does not undergo conformational change at acidic pH. Mutation of 2 residues to those found in M.tuberculosis (25-TA-26 to IH) alters the properties of this protein so that it inserts into liposomes at acidic pH, forming pores, like its M.tuberculosis counterpart. The chain is ESAT-6-like protein EsxA from Mycolicibacterium smegmatis (strain ATCC 700084 / mc(2)155) (Mycobacterium smegmatis).